A 591-amino-acid polypeptide reads, in one-letter code: MAKKLGKSPVAKEEDKEGLFASCSFTDLGLHPTLCAHLQDKMGFQAPTRIQAQAIPVAMSGQHMLVKAATGTGKTLAYLAPIVHLLQMREPRVERTDGTFALVLVPTRELCLQVYGIAQQLVHRFHWLVPGYIMGGENRAKEKARLRKGISILIATPGRLLDHLQHTSSFVYPNMRWIVFDEADSILELGFGKALEDILEHLGSRNDTSNQNKNKMEPMKRQNLLLSATLNEKVNRLAKISLKNPVMIGLDEQNSSAHGKNHTSLLSDDEEEILEKHNVTVEQAVDDFKLPAQLVQRYVKVSCGSRLAILLTILKSLFERQLSHKVVVFLSTCDSVDFHHTVLSQLEWSPGLQLDTDKKQKFISCKVFRLHGNMDQDDRKKSFLGFSSEKSAILVSTDVAARGLDFPKVKCIIQYDSPGEASEYVHRVGRTARIGEKGEALLFLQPIETDYLRDLELHGASLTEYPLQKVLDSFPVNGQRLHKRKQISLDMHPWIMSLQRALESFVTSEDTTKKLARDAFCSWVRAYTAHRGELKKIFMVKKLHLGHVARSFGLKEQPSLLGRSHQVQLKKRKKEQKRERPAKRRKIPAKR.

The short motif at 23 to 52 (CSFTDLGLHPTLCAHLQDKMGFQAPTRIQA) is the Q motif element. Positions 55–248 (IPVAMSGQHM…KISLKNPVMI (194 aa)) constitute a Helicase ATP-binding domain. 68 to 75 (AATGTGKT) provides a ligand contact to ATP. Positions 181 to 184 (DEAD) match the DEAD box motif. The 190-residue stretch at 293–482 (QLVQRYVKVS…SFPVNGQRLH (190 aa)) folds into the Helicase C-terminal domain. Residues 562–591 (GRSHQVQLKKRKKEQKRERPAKRRKIPAKR) form a disordered region. Positions 568–591 (QLKKRKKEQKRERPAKRRKIPAKR) are enriched in basic residues.

The protein belongs to the DEAD box helicase family. DDX31/DBP7 subfamily. In terms of tissue distribution, expressed in flowers and pollen grains.

It localises to the nucleus. The catalysed reaction is ATP + H2O = ADP + phosphate + H(+). Its function is as follows. May play a role in organellar ribosome biogenesis and suppress 16S rRNA maturation. The polypeptide is DEAD-box ATP-dependent RNA helicase 17 (Oryza sativa subsp. japonica (Rice)).